The chain runs to 647 residues: LIM domain kinase 1 (647 aa).

LIM zinc-binding domains lie at cysteine 25 to aspartate 75 and cysteine 84 to cysteine 137. In terms of domain architecture, PDZ spans leucine 165–proline 258. Position 210 is a phosphoserine (serine 210). At threonine 229 the chain carries Phosphothreonine. The disordered stretch occupies residues aspartate 260–glycine 319. 4 positions are modified to phosphoserine: serine 298, serine 302, serine 307, and serine 310. Positions serine 302–serine 313 are enriched in low complexity. Serine 323 is subject to Phosphoserine; by MAPKAPK2. Position 337 is a phosphoserine (serine 337). Positions leucine 339–leucine 604 constitute a Protein kinase domain. ATP contacts are provided by residues leucine 345 to alanine 353 and lysine 368. Aspartate 460 is an active-site residue. Threonine 508 is subject to Phosphothreonine; by ROCK1 and PAK1.

Belongs to the protein kinase superfamily. TKL Ser/Thr protein kinase family. In terms of assembly, interacts (via LIM domain) with the cytoplasmic domain of NRG1. Interacts with NISCH. Interacts with RLIM and RNF6. Self-associates to form homodimers. Interacts with HSP90AA1; this interaction promotes LIMK1 dimerization and subsequent transphosphorylation. Interacts with CDKN1C. Interacts with SSH1. Interacts with ROCK1. Interacts (via LIM zinc-binding domains) with FAM89B/LRAP25 (via LRR repeat). Forms a tripartite complex with CDC42BPA, CDC42BPB and FAM89B/LRAP25. Autophosphorylated. Phosphorylated on Thr-508 by ROCK1 and PAK1, resulting in activation. Phosphorylated by PAK4 which increases the ability of LIMK1 to phosphorylate cofilin. Phosphorylated at Ser-323 by MAPKAPK2 during activation of VEGFA-induced signaling, which results in activation of LIMK1 and promotion of actin reorganization, cell migration, and tubule formation of endothelial cells. Dephosphorylated and inactivated by SSH1. Phosphorylated by CDC42BP. Post-translationally, ubiquitinated. 'Lys-48'-linked polyubiquitination by RNF6 leads to proteasomal degradation through the 26S proteasome, modulating LIMK1 levels in the growth cone and its effect on axonal outgrowth. Also polyubiquitinated by RLIM. In terms of tissue distribution, highest expression in both adult and fetal nervous system. Detected ubiquitously throughout the different regions of adult brain, with highest levels in the cerebral cortex. Expressed to a lesser extent in heart and skeletal muscle.

Its subcellular location is the cytoplasm. The protein resides in the nucleus. It is found in the cytoskeleton. The protein localises to the cell projection. It localises to the lamellipodium. The enzyme catalyses L-seryl-[protein] + ATP = O-phospho-L-seryl-[protein] + ADP + H(+). It catalyses the reaction L-threonyl-[protein] + ATP = O-phospho-L-threonyl-[protein] + ADP + H(+). Serine/threonine-protein kinase that plays an essential role in the regulation of actin filament dynamics. Acts downstream of several Rho family GTPase signal transduction pathways. Activated by upstream kinases including ROCK1, PAK1 and PAK4, which phosphorylate LIMK1 on a threonine residue located in its activation loop. LIMK1 subsequently phosphorylates and inactivates the actin binding/depolymerizing factors cofilin-1/CFL1, cofilin-2/CFL2 and destrin/DSTN, thereby preventing the cleavage of filamentous actin (F-actin), and stabilizing the actin cytoskeleton. In this way LIMK1 regulates several actin-dependent biological processes including cell motility, cell cycle progression, and differentiation. Phosphorylates TPPP on serine residues, thereby promoting microtubule disassembly. Stimulates axonal outgrowth and may be involved in brain development. In terms of biological role, has a dominant negative effect on actin cytoskeletal changes. Required for atypical chemokine receptor ACKR2-induced phosphorylation of cofilin (CFL1). The protein is LIM domain kinase 1 (LIMK1) of Homo sapiens (Human).